Here is a 208-residue protein sequence, read N- to C-terminus: Proheparin-binding EGF-like growth factor (208 aa).

The signal sequence occupies residues methionine 1 to glycine 23. Positions glutamate 24–glutamine 62 are excised as a propeptide. At glutamate 24–threonine 160 the chain is on the extracellular side. Disordered stretches follow at residues alanine 35–arginine 57 and proline 80–lysine 104. The segment covering alanine 36–leucine 51 has biased composition (polar residues). O-linked (GalNAc...) threonine glycosylation occurs at threonine 85. The span at asparagine 91–glycine 102 shows a compositional bias: basic residues. An EGF-like domain is found at lysine 104–histidine 144. 3 cysteine pairs are disulfide-bonded: cysteine 108/cysteine 121, cysteine 116/cysteine 132, and cysteine 134/cysteine 143. Positions proline 149–histidine 208 are cleaved as a propeptide — C-terminal. The helical transmembrane segment at threonine 161–phenylalanine 184 threads the bilayer. At arginine 185 to histidine 208 the chain is on the cytoplasmic side.

As to quaternary structure, interacts with FBLN1. Interacts with EGFR and ERBB4. In terms of processing, O-glycosylated. As to expression, most abundant in kidney, skeletal muscle, lung, spleen, brain and heart.

The protein resides in the secreted. Its subcellular location is the extracellular space. It is found in the cell membrane. Growth factor that mediates its effects via EGFR, ERBB2 and ERBB4. Required for normal cardiac valve formation and normal heart function. Promotes smooth muscle cell proliferation. May be involved in macrophage-mediated cellular proliferation. It is mitogenic for fibroblasts, but not endothelial cells. It is able to bind EGF receptor/EGFR with higher affinity than EGF itself and is a far more potent mitogen for smooth muscle cells than EGF. Also acts as a diphtheria toxin receptor. In Mus musculus (Mouse), this protein is Proheparin-binding EGF-like growth factor (Hbegf).